The chain runs to 201 residues: CASP-like protein 1F2 (201 aa).

Residues Met1–Arg29 are Cytoplasmic-facing. Residues Ile30–Ile50 traverse the membrane as a helical segment. Residues Ser51–Arg78 lie on the Extracellular side of the membrane. The helical transmembrane segment at Phe79–Cys99 threads the bilayer. Topologically, residues Leu100–Asp119 are cytoplasmic. Residues Met120 to Gly140 form a helical membrane-spanning segment. The Extracellular segment spans residues Arg141–Gln162. The chain crosses the membrane as a helical span at residues Ala163 to Leu183. Residues Ala184 to Glu201 lie on the Cytoplasmic side of the membrane.

This sequence belongs to the Casparian strip membrane proteins (CASP) family. In terms of assembly, homodimer and heterodimers.

It is found in the cell membrane. The sequence is that of CASP-like protein 1F2 from Ricinus communis (Castor bean).